Here is a 170-residue protein sequence, read N- to C-terminus: uncharacterized protein (170 aa).

The protein localises to the mitochondrion. This is an uncharacterized protein from Arabidopsis thaliana (Mouse-ear cress).